A 146-amino-acid polypeptide reads, in one-letter code: Large-conductance mechanosensitive channel (146 aa).

2 helical membrane-spanning segments follow: residues 12-32 (AFAMKGNVVDMAVGVIIGGAF) and 88-108 (LQATFDFLIIAFSIFLFIKLI).

Belongs to the MscL family. In terms of assembly, homopentamer.

It is found in the cell inner membrane. Channel that opens in response to stretch forces in the membrane lipid bilayer. May participate in the regulation of osmotic pressure changes within the cell. This chain is Large-conductance mechanosensitive channel, found in Bacteroides fragilis (strain ATCC 25285 / DSM 2151 / CCUG 4856 / JCM 11019 / LMG 10263 / NCTC 9343 / Onslow / VPI 2553 / EN-2).